The sequence spans 115 residues: Large ribosomal subunit protein bL19 (115 aa).

Belongs to the bacterial ribosomal protein bL19 family.

This protein is located at the 30S-50S ribosomal subunit interface and may play a role in the structure and function of the aminoacyl-tRNA binding site. The sequence is that of Large ribosomal subunit protein bL19 from Buchnera aphidicola subsp. Cinara cedri (strain Cc).